The primary structure comprises 433 residues: Nuclear hormone receptor family member nhr-98 (433 aa).

The segment at residues 41–116 is a DNA-binding region (nuclear receptor); it reads SKKCQICENP…FGMTIDNFQF (76 aa). 2 NR C4-type zinc fingers span residues 44-64 and 80-104; these read CQIC…CRAC and CKTE…MQRC. Positions 177-433 constitute an NR LBD domain; the sequence is ETPYQVSNVL…CSHPGIFLNA (257 aa).

The protein belongs to the nuclear hormone receptor family.

It is found in the nucleus. Orphan nuclear receptor. The protein is Nuclear hormone receptor family member nhr-98 (nhr-98) of Caenorhabditis elegans.